The primary structure comprises 816 residues: Ribonucleoside-diphosphate reductase large subunit (816 aa).

In terms of domain architecture, ATP-cone spans 1–92 (MYVVKRDGRQ…VSNLHKNTKK (92 aa)). ATP is bound by residues 5-6 (KR), 11-17 (ETVHFDK), threonine 53, and aspartate 57. GDP is bound by residues serine 202 and serine 217. A disulfide bond links cysteine 218 and cysteine 444. DTTP contacts are provided by residues 226-228 (DSI), lysine 243, arginine 256, and 263-264 (RG). Asparagine 427 serves as a coordination point for GDP. Residue asparagine 427 is the Proton acceptor of the active site. Cysteine 429 functions as the Cysteine radical intermediate in the catalytic mechanism. GDP contacts are provided by residues glutamate 431 and 623–626 (TAST). The Proton acceptor role is filled by glutamate 431.

Belongs to the ribonucleoside diphosphate reductase large chain family. Heterotetramer of two large/R1 and two small/R2 subunits. A radical transfer pathway may occur between 'Tyr-125' of protein R2 and R1. Contains a disulfide bonds. Binding of the substrate occurs primarily when the active-site cysteines are reduced. As to expression, highly expressed in actively growing tissues such as young leaves, shoot apices, inflorescences and carpels. Very low expression in cotyledons, adult and cauline leaves and senescent leaves.

It localises to the cytoplasm. The catalysed reaction is a 2'-deoxyribonucleoside 5'-diphosphate + [thioredoxin]-disulfide + H2O = a ribonucleoside 5'-diphosphate + [thioredoxin]-dithiol. With respect to regulation, under complex allosteric control mediated by deoxynucleoside triphosphates and ATP binding to separate specificity and activation sites on the large subunit. The type of nucleotide bound at the specificity site determines substrate preference. It seems probable that ATP makes the enzyme reduce CDP and UDP, dGTP favors ADP reduction and dTTP favors GDP reduction. Stimulated by ATP and inhibited by dATP binding to the activity site. Its function is as follows. Provides the precursors necessary for DNA synthesis. Catalyzes the biosynthesis of deoxyribonucleotides from the corresponding ribonucleotides. R1 contains the binding sites for both substrates and allosteric effectors and carries out the actual reduction of the ribonucleotide. Ribonucleotide reductase (RNR) complex function is essential for efficient organellar DNA degradation in pollen. Involved in chloroplast division. The sequence is that of Ribonucleoside-diphosphate reductase large subunit from Arabidopsis thaliana (Mouse-ear cress).